We begin with the raw amino-acid sequence, 355 residues long: UDP-glucose 4-epimerase uge1 (355 aa).

Residue 8-39 participates in NAD(+) binding; the sequence is TVLVTGGAGYIGSHTCVVLLEKGYDVVIVDNL.

Belongs to the NAD(P)-dependent epimerase/dehydratase family. It depends on NAD(+) as a cofactor.

The catalysed reaction is UDP-alpha-D-glucose = UDP-alpha-D-galactose. Its pathway is carbohydrate metabolism; galactose metabolism. Major UDP-glucose/-galactose 4-epimerase under glucose-rich conditions involved in protein galactosylation. This Schizosaccharomyces pombe (strain 972 / ATCC 24843) (Fission yeast) protein is UDP-glucose 4-epimerase uge1 (uge1).